A 625-amino-acid chain; its full sequence is Probable potassium transport system protein Kup (625 aa).

12 consecutive transmembrane segments (helical) span residues 13–33, 53–73, 103–123, 141–161, 172–192, 206–226, 250–270, 282–302, 340–360, 369–389, 400–420, and 422–442; these read TALA…LYAL, ILSI…VAIV, IYMI…GIIT, VFDP…FLVQ, FGPI…HSVI, AIQF…AVVL, WFFV…ALLL, LLVP…ATVI, IYVP…ILIF, AYGL…AVFI, VLIL…ATSL, and ILSG…ILMT.

It belongs to the HAK/KUP transporter (TC 2.A.72) family.

It is found in the cell inner membrane. The catalysed reaction is K(+)(in) + H(+)(in) = K(+)(out) + H(+)(out). Functionally, transport of potassium into the cell. Likely operates as a K(+):H(+) symporter. This chain is Probable potassium transport system protein Kup, found in Acinetobacter baumannii (strain SDF).